The sequence spans 88 residues: MKKIQVVVKDPVGIHARPASIIAGEANKFKSELKLVSPSGVEGNIKSIINLMSLGIKQNDHITIKAEGTDEEEALNAIKAVLEKHQVI.

Residues 1 to 88 (MKKIQVVVKD…KAVLEKHQVI (88 aa)) form the HPr domain. The active-site Pros-phosphohistidine intermediate is His-15. At Ser-47 the chain carries Phosphoserine; by HPrK/P.

Belongs to the HPr family.

The protein resides in the cytoplasm. Phosphorylation on Ser-47 inhibits the phosphoryl transfer from enzyme I to HPr. General (non sugar-specific) component of the phosphoenolpyruvate-dependent sugar phosphotransferase system (sugar PTS). This major carbohydrate active-transport system catalyzes the phosphorylation of incoming sugar substrates concomitantly with their translocation across the cell membrane. The phosphoryl group from phosphoenolpyruvate (PEP) is transferred to the phosphoryl carrier protein HPr by enzyme I. Phospho-HPr then transfers it to the PTS EIIA domain. In terms of biological role, P-Ser-HPr interacts with the catabolite control protein A (CcpA), forming a complex that binds to DNA at the catabolite response elements cre, operator sites preceding a large number of catabolite-regulated genes. Thus, P-Ser-HPr is a corepressor in carbon catabolite repression (CCR), a mechanism that allows bacteria to coordinate and optimize the utilization of available carbon sources. P-Ser-HPr also plays a role in inducer exclusion, in which it probably interacts with several non-PTS permeases and inhibits their transport activity. This chain is Phosphocarrier protein HPr (ptsH), found in Mycoplasma pneumoniae (strain ATCC 29342 / M129 / Subtype 1) (Mycoplasmoides pneumoniae).